Reading from the N-terminus, the 447-residue chain is UDP-glycosyltransferase 76E3 (447 aa).

UDP-alpha-D-glucose contacts are provided by residues serine 269, alanine 328–glutamine 330, histidine 345–glutamate 353, and glutamine 367–glutamine 370.

The protein belongs to the UDP-glycosyltransferase family.

The sequence is that of UDP-glycosyltransferase 76E3 (UGT76E3) from Arabidopsis thaliana (Mouse-ear cress).